The chain runs to 253 residues: Ubiquinone biosynthesis O-methyltransferase (253 aa).

Residues arginine 47, glycine 78, aspartate 99, and methionine 141 each contribute to the S-adenosyl-L-methionine site.

The protein belongs to the methyltransferase superfamily. UbiG/COQ3 family.

The catalysed reaction is a 3-demethylubiquinol + S-adenosyl-L-methionine = a ubiquinol + S-adenosyl-L-homocysteine + H(+). The enzyme catalyses a 3-(all-trans-polyprenyl)benzene-1,2-diol + S-adenosyl-L-methionine = a 2-methoxy-6-(all-trans-polyprenyl)phenol + S-adenosyl-L-homocysteine + H(+). Its pathway is cofactor biosynthesis; ubiquinone biosynthesis. O-methyltransferase that catalyzes the 2 O-methylation steps in the ubiquinone biosynthetic pathway. The protein is Ubiquinone biosynthesis O-methyltransferase of Bradyrhizobium diazoefficiens (strain JCM 10833 / BCRC 13528 / IAM 13628 / NBRC 14792 / USDA 110).